We begin with the raw amino-acid sequence, 353 residues long: Heterogeneous nuclear ribonucleoproteins A2/B1 (353 aa).

Methionine 1 is modified (N-acetylmethionine). The residue at position 4 (threonine 4) is a Phosphothreonine. Leucine 5 participates in a covalent cross-link: Glycyl lysine isopeptide (Lys-Gly) (interchain with G-Cter in SUMO2). A Nuclear localization signal motif is present at residues 9–15 (PLERKKR). RRM domains are found at residues 21–104 (RKLF…ESGK) and 112–191 (KKLF…LSRQ). A Glycyl lysine isopeptide (Lys-Gly) (interchain with G-Cter in SUMO2) cross-link involves residue lysine 22. A Phosphoserine modification is found at serine 29. At arginine 38 the chain carries Omega-N-methylarginine. Serine 85 carries the post-translational modification Phosphoserine. An N6,N6-dimethyllysine; alternate modification is found at lysine 104. A Glycyl lysine isopeptide (Lys-Gly) (interchain with G-Cter in SUMO2); alternate cross-link involves residue lysine 104. Glycyl lysine isopeptide (Lys-Gly) (interchain with G-Cter in SUMO2) cross-links involve residues lysine 112, lysine 120, and lysine 137. Phosphothreonine is present on threonine 140. Serine 149 bears the Phosphoserine mark. Lysine 152 is covalently cross-linked (Glycyl lysine isopeptide (Lys-Gly) (interchain with G-Cter in SUMO2)). Phosphothreonine is present on threonine 159. Residues lysine 168 and lysine 173 each participate in a glycyl lysine isopeptide (Lys-Gly) (interchain with G-Cter in SUMO2); alternate cross-link. Residues lysine 168 and lysine 173 each carry the N6-acetyllysine; alternate modification. At threonine 176 the chain carries Phosphothreonine. Lysine 186 is covalently cross-linked (Glycyl lysine isopeptide (Lys-Gly) (interchain with G-Cter in SUMO2)). Residues serine 189 and serine 201 each carry the phosphoserine modification. Positions 193–353 (MQEVQSSRSG…SGGYGGRSRY (161 aa)) are disordered. The span at 202–223 (GRGGNFGFGDSRGGGGNFGPGP) shows a compositional bias: gly residues. Arginine 203 carries the post-translational modification Asymmetric dimethylarginine; alternate. Arginine 203 is modified (dimethylated arginine; alternate). Position 203 is an omega-N-methylarginine; alternate (arginine 203). Serine 212 is modified (phosphoserine). Arginine 213 bears the Asymmetric dimethylarginine; alternate mark. Arginine 213 is modified (dimethylated arginine; alternate). Omega-N-methylarginine; alternate is present on arginine 213. Serine 225 carries the post-translational modification Phosphoserine. Arginine 228 is subject to Omega-N-methylarginine. Phosphoserine occurs at positions 231 and 236. Arginine 238 bears the Omega-N-methylarginine mark. Serine 259 is subject to Phosphoserine. Arginine 266 carries the post-translational modification Asymmetric dimethylarginine; alternate. Arginine 266 bears the Omega-N-methylarginine; alternate mark. The segment at 308–347 (QQPSNYGPMKSGNFGGSRNMGGPYGGGNYGPGGSGGSGGY) is nuclear targeting sequence. Residues 320-353 (NFGGSRNMGGPYGGGNYGPGGSGGSGGYGGRSRY) are compositionally biased toward gly residues. The residue at position 324 (serine 324) is a Phosphoserine. The residue at position 325 (arginine 325) is an Omega-N-methylarginine. Residue tyrosine 331 is modified to Phosphotyrosine. Residues serine 341 and serine 344 each carry the phosphoserine modification. Tyrosine 347 carries the phosphotyrosine modification. Position 350 is an omega-N-methylarginine (arginine 350).

In terms of assembly, homodimer; dimerization is required for nucleocytoplasmic translocation. Identified in the spliceosome C complex. Identified in a IGF2BP1-dependent mRNP granule complex containing untranslated mRNAs. Interacts with IGF2BP1. Interacts with C9orf72. Interacts with DGCR8. Interacts with TARDBP. Interacts with CKAP5. Interacts with TBK1. Interacts with STING1. Interacts with SRC. Interacts with PPIA/CYPA. Interacts (via C-terminus) with FAM76B; the interaction results in retention of HNRNPA2B1 in the nucleus and inhibition of the NF-kappa-B-mediated inflammatory pathway. Interacts with NF-kappa-B inhibitors NFKBIA and NFKBIE; the interaction may be mediated by the RRM2 domain of HNRNPA2B1, and HNRNPA2B1 may interact simultaneously with FAM76B and either NFKBIA or NFKBIE to form a complex. Sumoylated in exosomes, promoting miRNAs-binding. Post-translationally, asymmetric dimethylation at Arg-266 constitutes the major methylation site. According to a report, methylation affects subcellular location and promotes nuclear localization. According to another report, methylation at Arg-266 does not influence nucleocytoplasmic shuttling.

The protein localises to the nucleus. It localises to the nucleoplasm. The protein resides in the cytoplasm. It is found in the cytoplasmic granule. Its subcellular location is the secreted. The protein localises to the extracellular exosome. Heterogeneous nuclear ribonucleoprotein (hnRNP) that associates with nascent pre-mRNAs, packaging them into hnRNP particles. The hnRNP particle arrangement on nascent hnRNA is non-random and sequence-dependent and serves to condense and stabilize the transcripts and minimize tangling and knotting. Packaging plays a role in various processes such as transcription, pre-mRNA processing, RNA nuclear export, subcellular location, mRNA translation and stability of mature mRNAs. Forms hnRNP particles with at least 20 other different hnRNP and heterogeneous nuclear RNA in the nucleus. Involved in transport of specific mRNAs to the cytoplasm in oligodendrocytes and neurons: acts by specifically recognizing and binding the A2RE (21 nucleotide hnRNP A2 response element) or the A2RE11 (derivative 11 nucleotide oligonucleotide) sequence motifs present on some mRNAs, and promotes their transport to the cytoplasm. Specifically binds single-stranded telomeric DNA sequences, protecting telomeric DNA repeat against endonuclease digestion. Also binds other RNA molecules, such as primary miRNA (pri-miRNAs): acts as a nuclear 'reader' of the N6-methyladenosine (m6A) mark by specifically recognizing and binding a subset of nuclear m6A-containing pri-miRNAs. Binding to m6A-containing pri-miRNAs promotes pri-miRNA processing by enhancing binding of DGCR8 to pri-miRNA transcripts. Involved in miRNA sorting into exosomes following sumoylation, possibly by binding (m6A)-containing pre-miRNAs. Acts as a regulator of efficiency of mRNA splicing, possibly by binding to m6A-containing pre-mRNAs. Plays a role in the splicing of pyruvate kinase PKM by binding repressively to sequences flanking PKM exon 9, inhibiting exon 9 inclusion and resulting in exon 10 inclusion and production of the PKM M2 isoform. Also plays a role in the activation of the innate immune response. Mechanistically, senses the presence of viral DNA in the nucleus, homodimerizes and is demethylated by JMJD6. In turn, translocates to the cytoplasm where it activates the TBK1-IRF3 pathway, leading to interferon alpha/beta production. Functionally, (Microbial infection) Involved in the transport of HIV-1 genomic RNA out of the nucleus, to the microtubule organizing center (MTOC), and then from the MTOC to the cytoplasm: acts by specifically recognizing and binding the A2RE (21 nucleotide hnRNP A2 response element) sequence motifs present on HIV-1 genomic RNA, and promotes its transport. This Homo sapiens (Human) protein is Heterogeneous nuclear ribonucleoproteins A2/B1 (HNRNPA2B1).